Reading from the N-terminus, the 263-residue chain is Adaptin ear-binding coat-associated protein 2 (263 aa).

Disordered regions lie at residues 167 to 191 (KKEG…LPPP) and 209 to 263 (GGSL…WVQF). Ser-181 is subject to Phosphoserine. Short sequence motifs (WXXF motif) lie at residues 218–221 (GSGG) and 238–241 (DIWG). A compositionally biased stretch (low complexity) spans 246 to 263 (STGSPSSQSQPGTGWVQF).

This sequence belongs to the NECAP family. As to quaternary structure, interacts with AP1G1 and AP2A1 components of the adapter protein complexes AP-1 and AP-2. Interacts with the GAE domain proteins GGA1, GGA2 and GGA3. In terms of tissue distribution, expressed in brain, heart, kidney, liver and lung (at protein level).

The protein resides in the cytoplasmic vesicle. The protein localises to the clathrin-coated vesicle membrane. It localises to the cell membrane. Involved in endocytosis. The chain is Adaptin ear-binding coat-associated protein 2 (Necap2) from Rattus norvegicus (Rat).